We begin with the raw amino-acid sequence, 330 residues long: Chromatin modification-related protein EAF3 (330 aa).

The region spanning 5 to 62 (DGEKVLCFHGPLIYAAKILKAEKWTGEENVTGQVGPHYLVHYDGWKKTWDEWVPETRL) is the Tudor-knot domain. Residues 96–129 (TSAASSLKRAKDSELPDRKSASRGTKRSREHVEA) form a disordered region. Positions 104–115 (RAKDSELPDRKS) are enriched in basic and acidic residues. One can recognise an MRG domain in the interval 135-329 (KRPEVKISLP…ASPAYHRISS (195 aa)).

This sequence belongs to the MRG family. In terms of assembly, component of the NuA4 histone acetyltransferase complex.

It localises to the nucleus. Functionally, involved in deacetylation of histones, chromatin assembly and chromosome segregation. May act as a transcriptional oscillator, directing histone deacetylases to specific chromosomal domains. Component of the NuA4 histone acetyltransferase complex which is involved in transcriptional activation of selected genes principally by acetylation of nucleosomal histone H4 and H2A. The NuA4 complex is also involved in DNA repair. The protein is Chromatin modification-related protein EAF3 (EAF3) of Mycosarcoma maydis (Corn smut fungus).